Here is a 105-residue protein sequence, read N- to C-terminus: Signal peptidase complex subunit 1 (105 aa).

The Cytoplasmic segment spans residues 1 to 32; the sequence is MDGMIAMLPAPLQKLSSHIDFQGQKVAERTYQ. The chain crosses the membrane as a helical span at residues 33-53; sequence VILTIAGIIGFLVGFWTQQLS. The Lumenal segment spans residues 54-56; that stretch reads YAM. The chain crosses the membrane as a helical span at residues 57-77; that stretch reads FTVLGASAFTALIILPPWPFL. Topologically, residues 78–105 are cytoplasmic; that stretch reads FRKNPIVWHTPAEPQESGDKKKETKKTK.

The protein belongs to the SPCS1 family. In terms of assembly, component of the signal peptidase complex (SPC) composed of a catalytic subunit sec-11 and three accessory subunits spcs-1, spcs-2 and spcs-3. The complex induces a local thinning of the ER membrane which is used to measure the length of the signal peptide (SP) h-region of protein substrates. This ensures the selectivity of the complex towards h-regions shorter than 18-20 amino acids.

It localises to the endoplasmic reticulum membrane. In terms of biological role, component of the signal peptidase complex (SPC) which catalyzes the cleavage of N-terminal signal sequences from nascent proteins as they are translocated into the lumen of the endoplasmic reticulum. Dispensable for SPC enzymatic activity. This Caenorhabditis elegans protein is Signal peptidase complex subunit 1.